Consider the following 205-residue polypeptide: Probable NAD(P)H dehydrogenase (quinone) FQR1-like 1 (205 aa).

Positions valine 5 to isoleucine 192 constitute a Flavodoxin-like domain. Residues serine 11 to histidine 15, isoleucine 112 to glycine 165, and histidine 136 contribute to the FMN site. Tyrosine 13 contacts NAD(+).

It belongs to the WrbA family. FMN serves as cofactor.

It is found in the cell membrane. It carries out the reaction a quinone + NADH + H(+) = a quinol + NAD(+). The catalysed reaction is a quinone + NADPH + H(+) = a quinol + NADP(+). Catalyzes the transfer of electrons from NADH and NADPH to reduce quinone to the hydroquinone state. The polypeptide is Probable NAD(P)H dehydrogenase (quinone) FQR1-like 1 (Arabidopsis thaliana (Mouse-ear cress)).